Reading from the N-terminus, the 976-residue chain is Protein phosphatase 1 regulatory subunit 12B (976 aa).

Residues 1–24 are compositionally biased toward basic and acidic residues; that stretch reads MAELEHLGGKRAESARARRAEQLR. The interval 1–52 is disordered; the sequence is MAELEHLGGKRAESARARRAEQLRRWRGSLTEQEPAERQGAGRQLQTRRGSP. The residue at position 29 (serine 29) is a Phosphoserine. ANK repeat units follow at residues 57 to 86, 90 to 119, 123 to 152, 216 to 245, and 249 to 278; these read EDGA…DINT, DGLT…NVNQ, EGWT…SVGI, SGAT…ELNV, and DGWT…DMDI. A disordered region spans residues 342-489; it reads EEIPKSQDTE…LDDKDKEREN (148 aa). A compositionally biased stretch (acidic residues) spans 362–374; the sequence is SEEEEGEDEVSES. The segment covering 375–385 has biased composition (basic and acidic residues); that stretch reads ETEKEADKKPE. Residues 411 to 423 are compositionally biased toward low complexity; the sequence is FSASSARRLSSLF. Residue threonine 444 is modified to Phosphothreonine. Low complexity predominate over residues 465-477; the sequence is SSIYRSSSSPRIS. Over residues 480 to 489 the composition is skewed to basic and acidic residues; it reads LDDKDKEREN. Residue serine 502 is modified to Phosphoserine. The tract at residues 503 to 873 is disordered; the sequence is STSDIEEKEN…LTSRVEEDSN (371 aa). Residues 538-564 show a composition bias toward polar residues; the sequence is ETPQTIAPSTYTSTYLKRTPYKSQADS. Residues 622 to 631 show a composition bias toward basic and acidic residues; it reads VRDEEAESLR. A compositionally biased stretch (basic residues) spans 632–642; it reads KARSRQARQTR. Threonine 645 carries the phosphothreonine modification. Residues 655 to 679 are compositionally biased toward basic and acidic residues; the sequence is EAEKTFSRSRAERQAQEQPGEKLED. 2 stretches are compositionally biased toward polar residues: residues 722 to 739 and 747 to 763; these read DKPT…SLYT and SRAS…STHA. Residues 765–777 show a composition bias toward basic and acidic residues; it reads AAKEMDTSEKGEA. The span at 791-801 shows a compositional bias: basic residues; that stretch reads ERRRAKDRRRG. Threonine 802 is subject to Phosphothreonine. Residues 818–830 are compositionally biased toward basic and acidic residues; the sequence is EEVKEALHERLSR. Residue serine 833 is modified to Phosphoserine. Basic and acidic residues predominate over residues 844–860; that stretch reads YSDRASARARREAREAR. Serine 941 carries the post-translational modification Phosphoserine.

As to quaternary structure, PP1 comprises a catalytic subunit, PPP1CA, PPP1CB or PPP1CC, and one or several targeting or regulatory subunits. PPP1R12B mediates binding to myosin. Isoform 3 and isoform 4 bind PPP1R12A, but not isoform 1 of PPP1R12B itself. Binds IL16.

The protein resides in the cytoplasm. It localises to the cytoskeleton. It is found in the stress fiber. In terms of biological role, regulates myosin phosphatase activity. Augments Ca(2+) sensitivity of the contractile apparatus. This Mus musculus (Mouse) protein is Protein phosphatase 1 regulatory subunit 12B (Ppp1r12b).